We begin with the raw amino-acid sequence, 208 residues long: MKQVFISQHPLVHHKLTLLRRATTEPKKFRELVSELSQFLLYEATLDLPLQERAIDTPLAPYHGHQIAERIGLVPILRAGLGMVDPILDLIPTAHVWHLGLYRDHATLQPVTYYNKLPPEVDVDLCLVLDPMLATGGSAVAAVSILKEWGASRIKFLGLIAAPEGVRALHEAHPNVPIHLAALDDHLNDRGYIVPGLGDAGDRLFGTG.

5-phospho-alpha-D-ribose 1-diphosphate contacts are provided by residues R78, R103, and 130 to 138; that span reads DPMLATGGS. Uracil-binding positions include I193 and 198 to 200; that span reads GDA. Residue D199 coordinates 5-phospho-alpha-D-ribose 1-diphosphate.

This sequence belongs to the UPRTase family. It depends on Mg(2+) as a cofactor.

The catalysed reaction is UMP + diphosphate = 5-phospho-alpha-D-ribose 1-diphosphate + uracil. The protein operates within pyrimidine metabolism; UMP biosynthesis via salvage pathway; UMP from uracil: step 1/1. Allosterically activated by GTP. Functionally, catalyzes the conversion of uracil and 5-phospho-alpha-D-ribose 1-diphosphate (PRPP) to UMP and diphosphate. This chain is Uracil phosphoribosyltransferase, found in Roseiflexus castenholzii (strain DSM 13941 / HLO8).